Reading from the N-terminus, the 129-residue chain is MSEETEDIWGIAHVHASFNNTIITITDQTGAETLAKSSGGTVVKQNRDEASPYAAMQMAEVVAEKALDRGVEGVDVRVRGPGGNLQTSPGPGAQATIRALARAGLEIGRIEDVTPTPHDGTRAPKNSGF.

The protein belongs to the universal ribosomal protein uS11 family. Part of the 30S ribosomal subunit.

Functionally, located on the platform of the 30S subunit. The polypeptide is Small ribosomal subunit protein uS11 (Haloarcula marismortui (strain ATCC 43049 / DSM 3752 / JCM 8966 / VKM B-1809) (Halobacterium marismortui)).